We begin with the raw amino-acid sequence, 540 residues long: Beta-glucosidase 1B (540 aa).

Residues glutamine 25, histidine 128, and asparagine 174 each coordinate substrate. Glutamate 175 serves as the catalytic Proton donor. Tyrosine 316 is a substrate binding site. The Nucleophile role is filled by glutamate 380. Substrate is bound by residues tryptophan 430 and 437–438 (EW). Low complexity predominate over residues 481–492 (PAAETKKAATPS). The tract at residues 481-524 (PAAETKKAATPSPLKPHGAISNGVSKKSSATKEPKSASRKKGRK) is disordered.

This sequence belongs to the glycosyl hydrolase 1 family.

The catalysed reaction is Hydrolysis of terminal, non-reducing beta-D-glucosyl residues with release of beta-D-glucose.. Plays an important role in cellulose degradation. Shows hydrolytic activity against several glycosidic compounds. This is Beta-glucosidase 1B from Phanerodontia chrysosporium (White-rot fungus).